We begin with the raw amino-acid sequence, 247 residues long: Ribosomal RNA large subunit methyltransferase E (247 aa).

A disordered region spans residues 1–21 (MKVNPKNSPKDNLKDSPKVSA). The span at 8 to 17 (SPKDNLKDSP) shows a compositional bias: basic and acidic residues. S-adenosyl-L-methionine contacts are provided by G80, W82, D108, D124, and D153. Residue K193 is the Proton acceptor of the active site.

It belongs to the class I-like SAM-binding methyltransferase superfamily. RNA methyltransferase RlmE family.

It is found in the cytoplasm. It catalyses the reaction uridine(2552) in 23S rRNA + S-adenosyl-L-methionine = 2'-O-methyluridine(2552) in 23S rRNA + S-adenosyl-L-homocysteine + H(+). Its function is as follows. Specifically methylates the uridine in position 2552 of 23S rRNA at the 2'-O position of the ribose in the fully assembled 50S ribosomal subunit. This is Ribosomal RNA large subunit methyltransferase E from Polaromonas sp. (strain JS666 / ATCC BAA-500).